The sequence spans 735 residues: Cyclic nucleotide-gated channel cone photoreceptor subunit alpha (735 aa).

Topologically, residues 1-214 (MAKINTQHSY…PSSNMYYNWL (214 aa)) are cytoplasmic. The disordered stretch occupies residues 142-191 (VNFSNNTNEDKKEEKKEVKEEKKEEKKEEKKEEKKDDKKDDKKDDKKDDK). Basic and acidic residues predominate over residues 149 to 191 (NEDKKEEKKEVKEEKKEEKKEEKKEEKKDDKKDDKKDDKKDDK). The helical transmembrane segment at 215–236 (TIIAAPVFYNWCMLICRACFDE) threads the bilayer. The Extracellular portion of the chain corresponds to 237–246 (LQIDHIKLWL). The helical transmembrane segment at 247–267 (FLDYCSDIIYVFDMFVRFRTG) threads the bilayer. Residues 268–292 (FLEQGLLVKDEKKLRDHYTQTVQFK) lie on the Cytoplasmic side of the membrane. Residues 293–311 (LDVLSLLPTDLAYLKLGLN) traverse the membrane as a helical segment. The Extracellular portion of the chain corresponds to 312-316 (YPELR). A helical membrane pass occupies residues 317 to 335 (FNRLLRIARLFEFFDRTET). The Cytoplasmic portion of the chain corresponds to 336–342 (RTNYPNM). The chain crosses the membrane as a helical span at residues 343–366 (FRIGNLVLYILIIIHWNACIYFAI). At 367–389 (SKVIGFGTDSWVYPNVSIPEYGR) the chain is on the extracellular side. The next 2 membrane-spanning stretches (helical) occupy residues 390–424 (LSRK…LFVV) and 425–449 (IDFL…SNMN). At 450 to 735 (ASRAEFQAKV…PEKPEEQKKD (286 aa)) the chain is on the cytoplasmic side. 3',5'-cyclic GMP-binding positions include 532-654 (LLIE…DNLI), glutamate 591, and arginine 606. The interval 715 to 735 (GSGSLSVGEPEPEKPEEQKKD) is disordered. Over residues 725 to 735 (EPEKPEEQKKD) the composition is skewed to basic and acidic residues.

Belongs to the cyclic nucleotide-gated cation channel (TC 1.A.1.5) family.

It is found in the membrane. Visual signal transduction is mediated by a G-protein coupled cascade using cGMP as second messenger. This protein can be activated by cyclic GMP which leads to an opening of the cation channel and thereby causing a depolarization of cone photoreceptors. In Gallus gallus (Chicken), this protein is Cyclic nucleotide-gated channel cone photoreceptor subunit alpha.